Here is a 99-residue protein sequence, read N- to C-terminus: Ubiquitin-related modifier 1 homolog (99 aa).

Gly99 carries the post-translational modification 1-thioglycine. Gly99 is covalently cross-linked (Glycyl lysine isopeptide (Gly-Lys) (interchain with K-? in acceptor proteins)).

The protein belongs to the URM1 family. Interacts with cer. In terms of processing, C-terminal thiocarboxylation occurs in 2 steps, it is first acyl-adenylated (-COAMP) via the hesA/moeB/thiF part of the MOCS3 homolog, then thiocarboxylated (-COSH) via the rhodanese domain of the MOCS3 homolog.

The protein resides in the cytoplasm. It functions in the pathway tRNA modification; 5-methoxycarbonylmethyl-2-thiouridine-tRNA biosynthesis. Functionally, acts as a sulfur carrier required for 2-thiolation of mcm(5)S(2)U at tRNA wobble positions of cytosolic tRNA(Lys), tRNA(Glu) and tRNA(Gln). Serves as sulfur donor in tRNA 2-thiolation reaction by being thiocarboxylated (-COSH) at its C-terminus by MOCS3. The sulfur is then transferred to tRNA to form 2-thiolation of mcm(5)S(2)U. Also acts as a ubiquitin-like protein (UBL) that is covalently conjugated via an isopeptide bond to lysine residues of target proteins such as Prx2/Jafrac1, Ciao1, Eip71CD and GILT1. The thiocarboxylated form serves as substrate for conjugation and oxidative stress specifically induces the formation of UBL-protein conjugates. In Drosophila virilis (Fruit fly), this protein is Ubiquitin-related modifier 1 homolog.